A 266-amino-acid chain; its full sequence is Thiazole synthase (266 aa).

The active-site Schiff-base intermediate with DXP is lysine 110. 1-deoxy-D-xylulose 5-phosphate-binding positions include glycine 171, 197 to 198 (AG), and 219 to 220 (AT).

It belongs to the ThiG family. In terms of assembly, homotetramer. Forms heterodimers with either ThiH or ThiS.

It localises to the cytoplasm. It carries out the reaction [ThiS sulfur-carrier protein]-C-terminal-Gly-aminoethanethioate + 2-iminoacetate + 1-deoxy-D-xylulose 5-phosphate = [ThiS sulfur-carrier protein]-C-terminal Gly-Gly + 2-[(2R,5Z)-2-carboxy-4-methylthiazol-5(2H)-ylidene]ethyl phosphate + 2 H2O + H(+). It participates in cofactor biosynthesis; thiamine diphosphate biosynthesis. Its function is as follows. Catalyzes the rearrangement of 1-deoxy-D-xylulose 5-phosphate (DXP) to produce the thiazole phosphate moiety of thiamine. Sulfur is provided by the thiocarboxylate moiety of the carrier protein ThiS. In vitro, sulfur can be provided by H(2)S. This is Thiazole synthase from Thermobifida fusca (strain YX).